Consider the following 161-residue polypeptide: Cytochrome b6-f complex subunit 4 (161 aa).

Transmembrane regions (helical) follow at residues 37-57 (LLYIFPVVIMGTISLVIGLAV), 96-116 (LLGVLIQTTIPLGLMLIPFIE), and 132-152 (SVFLFSVVFTLWLGIGATLPI).

It belongs to the cytochrome b family. PetD subfamily. The 4 large subunits of the cytochrome b6-f complex are cytochrome b6, subunit IV (17 kDa polypeptide, PetD), cytochrome f and the Rieske protein, while the 4 small subunits are PetG, PetL, PetM and PetN. The complex functions as a dimer.

It localises to the cellular thylakoid membrane. Component of the cytochrome b6-f complex, which mediates electron transfer between photosystem II (PSII) and photosystem I (PSI), cyclic electron flow around PSI, and state transitions. This chain is Cytochrome b6-f complex subunit 4, found in Acaryochloris marina (strain MBIC 11017).